The chain runs to 296 residues: Acetylglutamate kinase (296 aa).

Substrate contacts are provided by residues 67–68 (GG), arginine 89, and asparagine 194.

It belongs to the acetylglutamate kinase family. ArgB subfamily.

It localises to the cytoplasm. The enzyme catalyses N-acetyl-L-glutamate + ATP = N-acetyl-L-glutamyl 5-phosphate + ADP. Its pathway is amino-acid biosynthesis; L-arginine biosynthesis; N(2)-acetyl-L-ornithine from L-glutamate: step 2/4. Catalyzes the ATP-dependent phosphorylation of N-acetyl-L-glutamate. The chain is Acetylglutamate kinase from Brucella anthropi (strain ATCC 49188 / DSM 6882 / CCUG 24695 / JCM 21032 / LMG 3331 / NBRC 15819 / NCTC 12168 / Alc 37) (Ochrobactrum anthropi).